A 63-amino-acid chain; its full sequence is uncharacterized protein (63 aa).

This is an uncharacterized protein from Enterobacteria phage T4 (Bacteriophage T4).